The chain runs to 410 residues: Chaperonin GroEL (410 aa).

Residues 29–32, K50, and 86–90 each bind ATP; these read TAGP and DGTTT.

This sequence belongs to the chaperonin (HSP60) family. As to quaternary structure, forms a cylinder of 14 subunits composed of two heptameric rings stacked back-to-back. Interacts with the co-chaperonin GroES.

It localises to the cytoplasm. The catalysed reaction is ATP + H2O + a folded polypeptide = ADP + phosphate + an unfolded polypeptide.. Its function is as follows. Together with its co-chaperonin GroES, plays an essential role in assisting protein folding. The GroEL-GroES system forms a nano-cage that allows encapsulation of the non-native substrate proteins and provides a physical environment optimized to promote and accelerate protein folding. This Ehrlichia canis protein is Chaperonin GroEL.